We begin with the raw amino-acid sequence, 173 residues long: RTX-III toxin-activating lysine-acyltransferase ApxIIC (173 aa).

Residues His29 and Asp98 contribute to the active site.

This sequence belongs to the RTX toxin acyltransferase family. As to quaternary structure, homodimer.

The protein resides in the cytoplasm. The catalysed reaction is a fatty acyl-[ACP] + L-lysyl-[protein] = N(6)-(fatty acyl)-L-lysyl-[protein] + holo-[ACP] + H(+). Its function is as follows. Protein-lysine acyltransferase that catalyzes fatty acylation of the protoxin, thereby converting it to the active toxin. The protein is RTX-III toxin-activating lysine-acyltransferase ApxIIC (apxIIIC) of Actinobacillus pleuropneumoniae (Haemophilus pleuropneumoniae).